Consider the following 557-residue polypeptide: ADP-ribosylation factor-binding protein GGA1 (557 aa).

Residues Ala29 to Pro165 enclose the VHS domain. One can recognise a GAT domain in the interval Glu192–Gly317. Thr348 bears the Phosphothreonine mark. 4 positions are modified to phosphoserine: Ser353, Ser357, Ser378, and Ser394. Residues Ala440–Thr556 enclose the GAE domain.

In terms of assembly, binds to ARF1 and ARF2.

Its subcellular location is the golgi apparatus. It is found in the trans-Golgi network. May play a role in the regulation of membrane traffic through the trans-Golgi network. The protein is ADP-ribosylation factor-binding protein GGA1 (GGA1) of Saccharomyces cerevisiae (strain ATCC 204508 / S288c) (Baker's yeast).